A 216-amino-acid polypeptide reads, in one-letter code: Ribosome maturation factor RimP (216 aa).

The protein belongs to the RimP family.

The protein resides in the cytoplasm. Its function is as follows. Required for maturation of 30S ribosomal subunits. The polypeptide is Ribosome maturation factor RimP (Bartonella henselae (strain ATCC 49882 / DSM 28221 / CCUG 30454 / Houston 1) (Rochalimaea henselae)).